The primary structure comprises 250 residues: 5'-nucleotidase SurE (250 aa).

Asp-8, Asp-9, Ser-39, and Asn-91 together coordinate a divalent metal cation.

It belongs to the SurE nucleotidase family. Requires a divalent metal cation as cofactor.

Its subcellular location is the cytoplasm. The catalysed reaction is a ribonucleoside 5'-phosphate + H2O = a ribonucleoside + phosphate. Its function is as follows. Nucleotidase that shows phosphatase activity on nucleoside 5'-monophosphates. This chain is 5'-nucleotidase SurE, found in Leptospira borgpetersenii serovar Hardjo-bovis (strain JB197).